The primary structure comprises 1128 residues: Membrane-associated guanylate kinase, WW and PDZ domain-containing protein 3 (1128 aa).

The 87-residue stretch at 22–108 (WGGPAGPDPE…PVRLKTVRPG (87 aa)) folds into the PDZ 1 domain. Residues 116 to 290 (RHYLSLQFQK…SMDFRNYMSR (175 aa)) enclose the Guanylate kinase-like domain. 123–130 (FQKGSIDH) lines the ATP pocket. The disordered stretch occupies residues 184 to 276 (TYDGNFYGTP…DWMKPVPSYN (93 aa)). The span at 193-204 (PKPPAEPSPFQP) shows a compositional bias: pro residues. The span at 238 to 247 (LPEDEEEEEK) shows a compositional bias: acidic residues. Residues 257–267 (ENKEKHSDSSD) are compositionally biased toward basic and acidic residues. WW domains lie at 295–328 (EPLP…DPRL) and 341–374 (GELP…NPVL). PDZ domains lie at 412–494 (RTSL…TLCR) and 581–657 (TIPL…LILR). The tract at residues 658–688 (GGPPSPTKTGKMKDKQESSGSLEALSDAIPQ) is disordered. PDZ domains follow at residues 728–810 (DVFL…TVRR) and 852–939 (DVCL…VAEE). Disordered regions lie at residues 939-985 (EEHR…GKEV) and 999-1018 (LAQP…SQAQ). Polar residues-rich tracts occupy residues 946 to 956 (SGTNSAKQSPA) and 965 to 974 (AQSSASSTDR). The PDZ 6 domain maps to 1024-1106 (PVELERGPRG…KVLLLLRPGT (83 aa)).

It belongs to the MAGUK family.

Its subcellular location is the cell membrane. The protein resides in the cell junction. The protein localises to the tight junction. Acts as a scaffolding protein at cell-cell junctions, thereby regulating various cellular and signaling processes. This is Membrane-associated guanylate kinase, WW and PDZ domain-containing protein 3 (MAGI3) from Gallus gallus (Chicken).